A 287-amino-acid polypeptide reads, in one-letter code: 4-hydroxybenzoate octaprenyltransferase (287 aa).

A run of 6 helical transmembrane segments spans residues 41–61 (WPLL…GCAM), 89–109 (WEAV…ILPL), 133–153 (FFAI…PMAF), 158–178 (DTVP…SVAY), 202–224 (FGRF…YVWI), and 266–286 (HNNW…LLAG).

It belongs to the UbiA prenyltransferase family. Requires Mg(2+) as cofactor.

It localises to the cell inner membrane. It catalyses the reaction all-trans-octaprenyl diphosphate + 4-hydroxybenzoate = 4-hydroxy-3-(all-trans-octaprenyl)benzoate + diphosphate. It functions in the pathway cofactor biosynthesis; ubiquinone biosynthesis. Functionally, catalyzes the prenylation of para-hydroxybenzoate (PHB) with an all-trans polyprenyl group. Mediates the second step in the final reaction sequence of ubiquinone-8 (UQ-8) biosynthesis, which is the condensation of the polyisoprenoid side chain with PHB, generating the first membrane-bound Q intermediate 3-octaprenyl-4-hydroxybenzoate. The polypeptide is 4-hydroxybenzoate octaprenyltransferase (Burkholderia cenocepacia (strain HI2424)).